The chain runs to 310 residues: Dehydrodolichyl diphosphate synthase 2 (310 aa).

The protein belongs to the UPP synthase family. Mg(2+) is required as a cofactor.

Its pathway is protein modification; protein glycosylation. Its function is as follows. Catalyzes cis-prenyl chain elongation to produce the polyprenyl backbone of dolichol, a glycosyl carrier-lipid required for the biosynthesis of several classes of glycoprotein. The sequence is that of Dehydrodolichyl diphosphate synthase 2 from Arabidopsis thaliana (Mouse-ear cress).